Reading from the N-terminus, the 277-residue chain is F420-dependent methylenetetrahydromethanopterin dehydrogenase (277 aa).

Residues 249-277 (EKATDSVSRKPHGADGKRLNKTKLMEKPE) are disordered.

The protein belongs to the MTD family.

The enzyme catalyses 5,10-methylenetetrahydromethanopterin + oxidized coenzyme F420-(gamma-L-Glu)(n) + 2 H(+) = 5,10-methenyl-5,6,7,8-tetrahydromethanopterin + reduced coenzyme F420-(gamma-L-Glu)(n). It participates in one-carbon metabolism; methanogenesis from CO(2); 5,10-methylene-5,6,7,8-tetrahydromethanopterin from 5,10-methenyl-5,6,7,8-tetrahydromethanopterin (coenzyme F420 route): step 1/1. In terms of biological role, catalyzes the reversible reduction of methenyl-H(4)MPT(+) to methylene-H(4)MPT. The chain is F420-dependent methylenetetrahydromethanopterin dehydrogenase from Methanococcus aeolicus (strain ATCC BAA-1280 / DSM 17508 / OCM 812 / Nankai-3).